A 1225-amino-acid chain; its full sequence is uncharacterized protein (1225 aa).

The first 27 residues, 1-27 (MKRFLHRVKWPLLLSSIAVSLGIVAVA), serve as a signal peptide directing secretion. Cys28 carries the N-palmitoyl cysteine lipid modification. Cys28 is lipidated: S-diacylglycerol cysteine. The segment at 995–1014 (QSEKSSSNGGQAQLQSTQSS) is disordered.

The protein belongs to the MG307/MG309/MG338 family.

The protein resides in the cell membrane. This is an uncharacterized protein from Mycoplasma genitalium (strain ATCC 33530 / DSM 19775 / NCTC 10195 / G37) (Mycoplasmoides genitalium).